The sequence spans 431 residues: MRTGSMLRTISDSAIRDQAASTLSGKPRRWSWTAFFGPALIAAVAYIDPGNFATNIEAGSRYGYTLLWVVLAANLMAMLIQTLSARLGLATGQNLPQVIRARYPRPLVWCYWVQAEIVAIATDLAEFLGAALAFHLLFGLSLMEGALLTGTITYLALHLYRYGFRLMEILIGAMILAVAGGFILELVLSRPEPAPLLKGLLIPGFPDGYALYLAAGILGATVMPHVIYLHSALSQQRIQVKDDAHRLRLMRYYRLDVILGMAIAGLVNLSMLAMAAAVFHATGRLDVATISDSYLLLAPVVGQVTASHVFGLALLLAGLSSSIVGTLSGQVIMQGFVNVSIPLWLRRLVTMLPALAVIMLGISEQKALVASQVILSFGIPFALVPLLCFTANRQIMGNLVNRKSVTGVGTVVCTLIVALNVYVLFSTFTGH.

The next 12 membrane-spanning stretches (helical) occupy residues Trp30–Gly50, Gly63–Leu83, Pro106–Glu126, Leu137–Leu159, Ile169–Ser189, Tyr209–Leu229, Val257–Ala277, Val287–Ser307, Val309–Gly329, Ile341–Gly361, Ala367–Leu387, and Val405–Phe425.

Belongs to the NRAMP family.

It is found in the cell inner membrane. Functionally, h(+)-stimulated, divalent metal cation uptake system. The polypeptide is Divalent metal cation transporter MntH (Chromohalobacter salexigens (strain ATCC BAA-138 / DSM 3043 / CIP 106854 / NCIMB 13768 / 1H11)).